We begin with the raw amino-acid sequence, 257 residues long: Acetylglutamate kinase (257 aa).

Substrate contacts are provided by residues 41-42 (GG), arginine 63, and asparagine 156.

This sequence belongs to the acetylglutamate kinase family. ArgB subfamily.

It localises to the cytoplasm. It catalyses the reaction N-acetyl-L-glutamate + ATP = N-acetyl-L-glutamyl 5-phosphate + ADP. It participates in amino-acid biosynthesis; L-arginine biosynthesis; N(2)-acetyl-L-ornithine from L-glutamate: step 2/4. In terms of biological role, catalyzes the ATP-dependent phosphorylation of N-acetyl-L-glutamate. The chain is Acetylglutamate kinase from Geobacillus sp. (strain WCH70).